Here is a 235-residue protein sequence, read N- to C-terminus: Small capsomere-interacting protein (235 aa).

A disordered region spans residues 104-235 (PRIIRPQPPN…SGNASRSRRV (132 aa)). A compositionally biased stretch (polar residues) spans 127-139 (PQKTQSADQSALQ). The span at 158 to 188 (TTSASVGQQQHVVSGSSGQQPQQGAQSSTVQ) shows a compositional bias: low complexity. A compositionally biased stretch (polar residues) spans 220-235 (LSHTGQSGNASRSRRV).

Belongs to the herpesviridae small capsomere-interacting protein family. Interacts with the major capsid protein/MCP.

It localises to the virion. Its subcellular location is the host nucleus. Functionally, participates in the assembly of the infectious particles by decorating the outer surface of the capsid shell and thus forming a layer between the capsid and the tegument. Complexes composed of the capsid protein VP5 and VP26 assemble together in the host cytoplasm and are translocated to the nucleus, where they accumulate and participate in capsid assembly. In terms of biological role, participates in the assembly of the infectious particles by decorating the outer surface of the capsid shell and thus forming a layer between the capsid and the tegument. Complexes composed of the major capsid protein and small capsomere-interacting protein/SCP assemble together in the host cytoplasm and are translocated to the nucleus, where they accumulate and participate in capsid assembly. The sequence is that of Small capsomere-interacting protein from Homo sapiens (Human).